A 180-amino-acid chain; its full sequence is Signaling threshold-regulating transmembrane adapter 1 (180 aa).

Residues 1–24 (MSRDYNCTTDDQLAWGIPSISHAW) are Extracellular-facing. N6 carries an N-linked (GlcNAc...) asparagine glycan. Residues 25-45 (GLWALLGVVTVLLLISLAALL) traverse the membrane as a helical; Signal-anchor for type III membrane protein segment. Topologically, residues 46 to 180 (SQWTRGRRRN…AYANSQPAPS (135 aa)) are cytoplasmic. Residues S63 and S66 each carry the phosphoserine modification. Position 73 is a phosphotyrosine (Y73). The tract at residues 73–76 (YGNL) is interaction with GRB2. The segment at 81–103 (TGRLSQEPRSEEQDPPSSGGLAR) is disordered. S85 and S90 each carry phosphoserine. Phosphotyrosine is present on residues Y111, Y132, and Y153. The interval 130-135 (IKYCEV) is interaction with PTPN11. An interaction with CSK region spans residues 153-156 (YASV). The residue at position 166 (S166) is a Phosphoserine. Y172 carries the phosphotyrosine modification. Residues 172 to 175 (YANS) form an interaction with GRB2 region.

In terms of assembly, homodimer; disulfide-linked. When phosphorylated, interacts with PTPN11/SHP2, GRB2 and CSK. Phosphorylated on tyrosines upon TCR activation; which leads to the recruitment of PTPN11, GRB2 and CSK. Expressed in thymus and spleen, with highest levels in immature thymocytes (at protein level).

It is found in the cell membrane. Functionally, negatively regulates T-cell antigen receptor (TCR)-mediated signaling. Involved in positive selection of T-cells. The chain is Signaling threshold-regulating transmembrane adapter 1 (Sit1) from Mus musculus (Mouse).